Here is a 327-residue protein sequence, read N- to C-terminus: MSRMHEEVELEKSVRRLREKFHGLIEIDTAVLLMRRYVKNHRMVAMWIALMADNDRELDEEDQAALNNDPVAKNVIMKLKAEEQQQEEKHAKSSSSGSSGAGPSAKAKKQPSDDRDITELGTRLRVLPLTMENKRMFDQAQANQIPSDTHQFACESCDRDWWRRVPQRKRVSRCHRCKKKNDPVPPDRMWGIAEFTCPNCTRNFKGFGRMDGRSPCYGCRSAIYPMKILPPRRKNMMPGPKQRNQHSCFAEDCYHRMEPHVPGTECVHPHSRQKNRKPRVVYPSPAHISSGSTVNTCLSQGSLIESINELILDDIEEESEDDSDSSS.

Over residues 82–91 the composition is skewed to basic and acidic residues; sequence EEQQQEEKHA. The tract at residues 82 to 121 is disordered; that stretch reads EEQQQEEKHAKSSSSGSSGAGPSAKAKKQPSDDRDITELG. Residues 93 to 105 are compositionally biased toward low complexity; it reads SSSSGSSGAGPSA. The Nuclear localization signal signature appears at 163–179; that stretch reads RRVPQRKRVSRCHRCKK. A Nuclear export signal motif is present at residues 304–312; the sequence is IESINELIL.

Belongs to the SHFL family.

It localises to the cytoplasm. The protein resides in the nucleus. The protein localises to the P-body. Its function is as follows. Inhibits programmed -1 ribosomal frameshifting (-1PRF) of a variety of mRNAs from viruses and cellular genes. Interacts with the -1PRF signal of target mRNA and translating ribosomes and causes premature translation termination at the frameshifting site. May exhibit antiviral activity. In Danio rerio (Zebrafish), this protein is Shiftless antiviral inhibitor of ribosomal frameshifting protein homolog (shfl).